A 343-amino-acid chain; its full sequence is Aspartate-semialdehyde dehydrogenase (343 aa).

11-14 (TGMV) serves as a coordination point for NADP(+). R109 lines the phosphate pocket. The active-site Acyl-thioester intermediate is the C148. Q174 is a substrate binding site. 177–178 (SG) is an NADP(+) binding site. E200 is a substrate binding site. Residue K203 participates in phosphate binding. Residue R233 coordinates substrate. Residue H240 is the Proton acceptor of the active site. 321–322 (NT) contributes to the NADP(+) binding site.

This sequence belongs to the aspartate-semialdehyde dehydrogenase family. Homodimer.

It catalyses the reaction L-aspartate 4-semialdehyde + phosphate + NADP(+) = 4-phospho-L-aspartate + NADPH + H(+). Its pathway is amino-acid biosynthesis; L-lysine biosynthesis via DAP pathway; (S)-tetrahydrodipicolinate from L-aspartate: step 2/4. It functions in the pathway amino-acid biosynthesis; L-methionine biosynthesis via de novo pathway; L-homoserine from L-aspartate: step 2/3. It participates in amino-acid biosynthesis; L-threonine biosynthesis; L-threonine from L-aspartate: step 2/5. In terms of biological role, catalyzes the NADPH-dependent formation of L-aspartate-semialdehyde (L-ASA) by the reductive dephosphorylation of L-aspartyl-4-phosphate. This chain is Aspartate-semialdehyde dehydrogenase, found in Archaeoglobus fulgidus (strain ATCC 49558 / DSM 4304 / JCM 9628 / NBRC 100126 / VC-16).